Here is a 191-residue protein sequence, read N- to C-terminus: Glycerol-3-phosphate acyltransferase (191 aa).

6 helical membrane-spanning segments follow: residues 7-27 (ILVL…SYIG), 51-71 (KLAV…VMLA), 80-100 (FVFM…WLSF), 115-135 (FIEY…FVIF), 139-159 (SLSS…HYSA), and 161-181 (ESIT…ENIV).

It belongs to the PlsY family. In terms of assembly, probably interacts with PlsX.

Its subcellular location is the cell inner membrane. The catalysed reaction is an acyl phosphate + sn-glycerol 3-phosphate = a 1-acyl-sn-glycero-3-phosphate + phosphate. It functions in the pathway lipid metabolism; phospholipid metabolism. Functionally, catalyzes the transfer of an acyl group from acyl-phosphate (acyl-PO(4)) to glycerol-3-phosphate (G3P) to form lysophosphatidic acid (LPA). This enzyme utilizes acyl-phosphate as fatty acyl donor, but not acyl-CoA or acyl-ACP. This is Glycerol-3-phosphate acyltransferase from Ehrlichia canis (strain Jake).